We begin with the raw amino-acid sequence, 313 residues long: MASPQHPGGPGWTGPRNQCITRTRQEVLPPGPDLPCPGPEEAQDGPTSNSNMTTRELQEHWQKEKSRWKHVRLLFEIASARIEERKVSKFVMYQVVVIQTGSFDSDKAVVERRYSDFERLQRALLKRFGPELEDVTFPRKRLTGNLSAETICERRLELREYLRLLYAVRAVRRSREFADFLTRPELCEAFGCLRAGQYARALDLLGRVVPLQEKLTAHCPSAPVPALCAMLVCLRDLERPAEAFAVGERALRRLGARESHRYYAPLLDAMVRLAYALGKDLASLQGRLDESQLRRPTHRGATLKELTVREYLS.

Positions 1 to 61 are disordered; sequence MASPQHPGGP…MTTRELQEHW (61 aa). Ser3 is subject to Phosphoserine. A compositionally biased stretch (pro residues) spans 29-38; the sequence is PPGPDLPCPG. Residues 45-55 show a composition bias toward polar residues; sequence GPTSNSNMTTR. Residues 71–188 enclose the PX domain; the sequence is VRLLFEIASA…DFLTRPELCE (118 aa). The a 1,2-diacyl-sn-glycero-3-phospho-(1D-myo-inositol-3-phosphate) site is built by Arg113, Ser115, Lys140, and Arg154.

It belongs to the sorting nexin family. Interacts with SELPLG. Interaction with SELPLG is controversial.

The protein localises to the early endosome membrane. Its subcellular location is the cell membrane. It localises to the cytoplasm. The protein resides in the nucleus. Its function is as follows. May play a role in cellular vesicle trafficking. Has been proposed to function as a sorting protein that targets SELPLG into endosomes, but has no effect on SELPLG internalization from the cell surface, or on SELPLG-mediated cell-cell adhesion. The polypeptide is Sorting nexin-20 (Snx20) (Rattus norvegicus (Rat)).